A 262-amino-acid polypeptide reads, in one-letter code: Triosephosphate isomerase (262 aa).

9 to 11 (NWK) is a binding site for substrate. His99 serves as the catalytic Electrophile. The active-site Proton acceptor is the Glu171. 2 residues coordinate substrate: Gly177 and Ser216.

This sequence belongs to the triosephosphate isomerase family. As to quaternary structure, homodimer.

Its subcellular location is the cytoplasm. The catalysed reaction is D-glyceraldehyde 3-phosphate = dihydroxyacetone phosphate. It functions in the pathway carbohydrate biosynthesis; gluconeogenesis. The protein operates within carbohydrate degradation; glycolysis; D-glyceraldehyde 3-phosphate from glycerone phosphate: step 1/1. Functionally, involved in the gluconeogenesis. Catalyzes stereospecifically the conversion of dihydroxyacetone phosphate (DHAP) to D-glyceraldehyde-3-phosphate (G3P). This Blochmanniella floridana protein is Triosephosphate isomerase.